Here is a 739-residue protein sequence, read N- to C-terminus: MVKIKKTKGMRKQIRLNEVEEINLLKQWIESQKPDSGFNPLSLRPLPKDSKIGKSEDGKNGTVFSRYAGVRKFAQLPISDKTKRGLKDAKYVDMTDVQSAAIPHALCGRDILGAARTGSGKTLAFVIPILEKLHRERWSPEDGVGCIIISPTRELAAQTFGVLNKVGKFHKFSAGLLIGGREGVDVEKERVHEMNILVCAPGRLLQHMDETPNFECPQLQILILDEADRVLDSAFKGQLDPIISQLPKHRQTLLFSATQTKKVKDLARLSLRDPEYISVHAEAVTATPTSLMQTVMIVPVEKKLDMLWSFIKTHLNSRILVFLSTKKQVKFVHEAFNKLRPGIPLKSLHGKMSQEKRMGVYSQFIERQSVLFCTDVLARGLDFDKAVDWVVQVDCPEDVASYIHRVGRTARFYTQGKSLLFLTPSEEKMIEKLQEAKVPIKLIKANNQKLQEVSRLLAALLVKYPDLQGVAQRAFITYLRSIHKRRDKEIFDVSKLSIENFSASLGLPMTPRIRFTNLKTKKKGVYESSIAMEIENAQEYEAPLVVKKDLLGEDLEEEDFALKPRKEGKVVEKSTKEEEVLIPGNRVLKNKKLKINLHRPFGSRVVLDEEGNSLAPLASVAAEAGTEVALDEERMNDYYKKVGAEMRKADIEDKKVDKERRREKRMKQKIKRKRGAMEDEEEEEEEDHDGSGSSDDETGRNSKRAKKIVSDNEENGGKINTDSLSVADLEEMALKFITQ.

A Q motif motif is present at residues 71–99; the sequence is RKFAQLPISDKTKRGLKDAKYVDMTDVQS. The Helicase ATP-binding domain maps to 102-277; the sequence is IPHALCGRDI…RLSLRDPEYI (176 aa). 115–122 is an ATP binding site; the sequence is ARTGSGKT. Positions 225–228 match the DEAD box motif; the sequence is DEAD. Positions 303–461 constitute a Helicase C-terminal domain; that stretch reads KLDMLWSFIK…EVSRLLAALL (159 aa). Positions 643 to 689 form a coiled coil; sequence GAEMRKADIEDKKVDKERRREKRMKQKIKRKRGAMEDEEEEEEEDHD. The interval 656 to 725 is disordered; it reads VDKERRREKR…GGKINTDSLS (70 aa). A compositionally biased stretch (basic residues) spans 661–674; the sequence is RREKRMKQKIKRKR. The span at 678–688 shows a compositional bias: acidic residues; the sequence is EDEEEEEEEDH.

Belongs to the DEAD box helicase family. DDX10/DBP4 subfamily.

The catalysed reaction is ATP + H2O = ADP + phosphate + H(+). The protein is DEAD-box ATP-dependent RNA helicase 32 (RH32) of Arabidopsis thaliana (Mouse-ear cress).